The primary structure comprises 145 residues: Large ribosomal subunit protein uL11 (145 aa).

Belongs to the universal ribosomal protein uL11 family. Part of the ribosomal stalk of the 50S ribosomal subunit. Interacts with L10 and the large rRNA to form the base of the stalk. L10 forms an elongated spine to which L12 dimers bind in a sequential fashion forming a multimeric L10(L12)X complex. One or more lysine residues are methylated.

Its function is as follows. Forms part of the ribosomal stalk which helps the ribosome interact with GTP-bound translation factors. In Persephonella marina (strain DSM 14350 / EX-H1), this protein is Large ribosomal subunit protein uL11.